Here is a 294-residue protein sequence, read N- to C-terminus: N-acetylmuramic acid 6-phosphate etherase (294 aa).

The SIS domain maps to 56-219; sequence TSQALKKGGR…STLSMVSVGK (164 aa). The active-site Proton donor is the Glu-84. Glu-115 is a catalytic residue.

Belongs to the GCKR-like family. MurNAc-6-P etherase subfamily. In terms of assembly, homodimer.

The enzyme catalyses N-acetyl-D-muramate 6-phosphate + H2O = N-acetyl-D-glucosamine 6-phosphate + (R)-lactate. Its pathway is amino-sugar metabolism; 1,6-anhydro-N-acetylmuramate degradation. It functions in the pathway amino-sugar metabolism; N-acetylmuramate degradation. It participates in cell wall biogenesis; peptidoglycan recycling. In terms of biological role, specifically catalyzes the cleavage of the D-lactyl ether substituent of MurNAc 6-phosphate, producing GlcNAc 6-phosphate and D-lactate. Together with AnmK, is also required for the utilization of anhydro-N-acetylmuramic acid (anhMurNAc) either imported from the medium or derived from its own cell wall murein, and thus plays a role in cell wall recycling. The polypeptide is N-acetylmuramic acid 6-phosphate etherase (Francisella philomiragia subsp. philomiragia (strain ATCC 25017 / CCUG 19701 / FSC 153 / O#319-036)).